Reading from the N-terminus, the 938-residue chain is Glutamate receptor ionotropic, NMDA 1 (938 aa).

Positions Met1–Ala18 are cleaved as a signal peptide. The Extracellular segment spans residues Arg19 to Gln559. 10 N-linked (GlcNAc...) asparagine glycosylation sites follow: Asn61, Asn203, Asn239, Asn276, Asn300, Asn350, Asn368, Asn440, Asn471, and Asn491. Cys79 and Cys308 are joined by a disulfide. Cystine bridges form between Cys420–Cys454 and Cys436–Cys455. 3 residues coordinate glycine: Pro516, Thr518, and Arg523. The chain crosses the membrane as a helical span at residues Ser560–Leu580. The Cytoplasmic portion of the chain corresponds to Asp581–Ser604. Residues Leu603–Pro624 are pore-forming. An intramembrane region (discontinuously helical) is located at residues Ser605 to Leu615. The Cytoplasmic portion of the chain corresponds to Asn616–Phe627. A helical membrane pass occupies residues Ser628 to Thr648. The Extracellular portion of the chain corresponds to Ala649–Glu811. The N-linked (GlcNAc...) asparagine glycan is linked to Asn674. Residues Ser688 and Asp732 each contribute to the glycine site. Cys744 and Cys798 are joined by a disulfide. The N-linked (GlcNAc...) asparagine glycan is linked to Asn771. Residues Asn812–Ile835 traverse the membrane as a helical segment. Over Ala836–Ser938 the chain is Cytoplasmic. Ser889, Ser890, Ser896, and Ser897 each carry phosphoserine; by PKC. The disordered stretch occupies residues Ser889–Ser938. The segment covering Val916–Gly927 has biased composition (basic and acidic residues).

The protein belongs to the glutamate-gated ion channel (TC 1.A.10.1) family. NR1/GRIN1 subfamily. Heterotetramer; the NMDAR subunits are modular and harbor tiered domains that function in concert to regulate opening and closing of the cation-selective ion channel pore. Forms heterotetrameric channels composed of two GluN1/zeta subunits (GRIN1), and two identical GluN2/epsilon subunits (GRIN2A, GRIN2B, GRIN2C or GRIN2D) or GluN3 subunits (GRIN3A or GRIN3B) (in vitro). Can also form heterotetrameric channels that contain at least two GluN1 subunits and at least two different GluN2 subunits (or a combination of one GluN2 and one GluN3 subunits) (in vitro). In vivo, the subunit composition may vary in function of the expression levels of the different subunits. Found in a complex with GRIN2A or GRIN2B, GRIN3A and PPP2CB. Found in a complex with GRIN2A or GRIN2B and GRIN3B. Interacts with SNX27 (via PDZ domain); the interaction is required for recycling to the plasma membrane when endocytosed and prevent degradation in lysosomes. Interacts with DLG4 and MPDZ. Interacts with LRFN1 and LRFN2. Interacts with MYZAP. Found in a complex with DLG4 and PRR7. Found in a complex with GRIN2B and PRR7. Interacts with PRR7; the interaction is reduced following NMDA receptor activity. Post-translationally, NMDA is probably regulated by C-terminal phosphorylation of an isoform of GRIN1 by PKC. Dephosphorylated on Ser-897 probably by protein phosphatase 2A (PPP2CB). Its phosphorylated state is influenced by the formation of the NMDAR-PPP2CB complex and the NMDAR channel activity.

The protein localises to the cell membrane. It localises to the postsynaptic cell membrane. Its subcellular location is the postsynaptic density membrane. It is found in the synaptic cell membrane. It carries out the reaction Ca(2+)(in) = Ca(2+)(out). The catalysed reaction is Na(+)(in) = Na(+)(out). It catalyses the reaction K(+)(in) = K(+)(out). With respect to regulation, NMDA glutamate receptor activity is inhbited by Mg2(+) in a voltage-dependent manner; Mg2(+)-induced blockade occurs only at negative potentials and decreases with membrane depolarization. 7-chlorokynurenate (50 uM) or Zn2(+) (100 uM) partially inhibit the NMDA glutamate receptor activity, while acide 2-amino-5-phosphonovalerique(100 uM) almost completely blocked the NMDA glutamate receptor activity. Dizocilpine (1 uM) results in long lasting and almost complete block of the NMDA glutamate receptor activity. In terms of biological role, component of N-methyl-D-aspartate (NMDA) receptors (NMDARs) that function as heterotetrameric, ligand-gated cation channels with high calcium permeability and voltage-dependent block by Mg(2+). NMDARs participate in synaptic plasticity for learning and memory formation by contributing to the long-term potentiation (LTP). Channel activation requires binding of the neurotransmitter L-glutamate to the GluN2 subunit, glycine or D-serine binding to the GluN1 subunit, plus membrane depolarization to eliminate channel inhibition by Mg(2+). NMDARs mediate simultaneously the potasium efflux and the influx of calcium and sodium. Each GluN2 or GluN3 subunit confers differential attributes to channel properties, including activation, deactivation and desensitization kinetics, pH sensitivity, Ca2(+) permeability, and binding to allosteric modulators. The chain is Glutamate receptor ionotropic, NMDA 1 from Homo sapiens (Human).